The following is a 203-amino-acid chain: Orotate phosphoribosyltransferase (203 aa).

5-phospho-alpha-D-ribose 1-diphosphate is bound by residues R94, K98, H100, and 120 to 128; that span reads EDLISTGGS. S124 serves as a coordination point for orotate.

This sequence belongs to the purine/pyrimidine phosphoribosyltransferase family. PyrE subfamily. As to quaternary structure, homodimer. Mg(2+) is required as a cofactor.

It catalyses the reaction orotidine 5'-phosphate + diphosphate = orotate + 5-phospho-alpha-D-ribose 1-diphosphate. Its pathway is pyrimidine metabolism; UMP biosynthesis via de novo pathway; UMP from orotate: step 1/2. Catalyzes the transfer of a ribosyl phosphate group from 5-phosphoribose 1-diphosphate to orotate, leading to the formation of orotidine monophosphate (OMP). The chain is Orotate phosphoribosyltransferase from Staphylococcus aureus (strain MSSA476).